We begin with the raw amino-acid sequence, 357 residues long: MGCIMSQEDEAAKRRSKKIDRLLKEDGENSMRTIKLLLLGAGESGKSTILKQMRIIHDVGYTTEERKVFRGVVYGNIILSLNAIIHAMEQLKISFTTLDHESDARKLLMFSTTGEEDELPEELVVLMKSVWSDSGIQKALERSREYQLNDSAGYYLSQLDRICAPNYIPTQDDILRTRIKTTGIVETQFVYKDRLFLVFDVGGQRSERKKWIHCFEDVTALIFCVALSEYDMVLVEDCQTNRMRESLKLFDSICNNKWFVETSIILFLNKKDLFEEKIVRSPLTHCFPEYTGANNYEEASAYIQQQFEDMNKRTTGEKNQEIYTQFTCATDTNNIRFVFDAVTDIIIRDNLRTCGLY.

Glycine 2 is lipidated: N-myristoyl glycine. Cysteine 3 carries S-palmitoyl cysteine lipidation. Residues 32–357 form the G-alpha domain; sequence RTIKLLLLGA…RDNLRTCGLY (326 aa). A G1 motif region spans residues 35–48; that stretch reads KLLLLGAGESGKST. Residues 40–47, 175–181, 200–204, 269–272, and alanine 329 each bind GTP; these read GAGESGKS, LRTRIKT, DVGGQ, and NKKD. Residues serine 47 and threonine 181 each contribute to the Mg(2+) site. Residues 173–181 are G2 motif; the sequence is DILRTRIKT. Positions 196-205 are G3 motif; sequence FLVFDVGGQR. Residues 265 to 272 form a G4 motif region; the sequence is ILFLNKKD. Residues 327–332 form a G5 motif region; the sequence is TCATDT.

Belongs to the G-alpha family. G proteins are composed of 3 units; alpha, beta and gamma. The alpha chain contains the guanine nucleotide binding site.

Functionally, guanine nucleotide-binding proteins (G proteins) are involved as modulators or transducers in various transmembrane signaling systems. In the 1-cell embryo, probably together with goa-1, controls nuclear rotation and spindle elongation during mitosis. During the first embryonic cell divisons, plays a role in gpr-1/2 cortical localization and in the proper orientation of EMS blastomere mitotic spindle. The sequence is that of Guanine nucleotide-binding protein alpha-16 subunit (gpa-16) from Caenorhabditis elegans.